We begin with the raw amino-acid sequence, 425 residues long: O-methyltransferase AMT9 (425 aa).

S-adenosyl-L-methionine is bound by residues 257–258 (GG), Asp-280, 306–307 (DF), Arg-322, and Arg-323. His-326 serves as the catalytic Proton acceptor.

It belongs to the class I-like SAM-binding methyltransferase superfamily. Cation-independent O-methyltransferase family.

It participates in mycotoxin biosynthesis. Its function is as follows. O-methyltransferase; part of the gene clusters that mediate the biosynthesis of AM-toxins, host-selective toxins (HSTs) causing Alternaria blotch on apple, a worldwide distributed disease. AM-toxins are cyclic depsipeptides containing the 3 residues 2-hydroxy-isovaleric acid (2-HIV), dehydroalanine, L-alanine which are common for all 3 AM-toxins I to III. The fourth precursor is L-alpha-amino-methoxyphenyl-valeric acid (L-Amv) for AM-toxin I, L-alpha-amino-phenyl-valeric acid (L-Apv) for AM-toxin II, and L-alpha-amino-hydroxyphenyl-valeric acid (L-Ahv) for AM-toxin III. AM-toxins have two target sites for affecting susceptible apple cells; they cause invagination of the plasma membrane and electrolyte loss and chloroplast disorganization. The non-ribosomal peptide synthetase AMT1 contains 4 catalytic modules and is responsible for activation of each residue in AM-toxin. The aldo-keto reductase AMT2 catalyzes the conversion of 2-keto-isovaleric acid (2-KIV) to 2-hydroxy-isovaleric acid (2-HIV), one of the precursor residues incorporated by AMT1 during AM-toxin biosynthesis, by reduction of its ketone to an alcohol. The cytochrome P450 monooxygenase AMT3 and the thioesterase AMT4 are also important for AM-toxin production, but their exact function within the AM-toxin biosynthesis are not known yet. Up to 21 proteins (including AMT1 to AMT4) are predicted to be involved in AM-toxin biosynthesis since their expression ishighly up-regulated in AM-toxin-producing cultures. This is O-methyltransferase AMT9 from Alternaria alternata (Alternaria rot fungus).